Reading from the N-terminus, the 1107-residue chain is Dynein axonemal assembly factor 1 homolog (1107 aa).

LRR repeat units lie at residues 34–56, 57–78, 79–100, 101–122, 125–146, and 150–171; these read HLND…EEYV, GLKC…EYQT, ELKC…DSCK, QLDT…GHDI, VLNT…DHLR, and FVSV…KILG. Positions 184–223 constitute an LRRCT domain; that stretch reads NPVVNEIPSYRKTLILECKNLTYLDTRPVFDRDRACAEAW. 6 disordered regions span residues 258–281, 428–487, 500–608, 780–810, 834–855, and 1070–1107; these read HRGD…KASK, NESP…TLNV, ESKD…LEKE, KEEP…EHEQ, SSED…AEED, and AAHA…DNCD. The segment covering 428-437 has biased composition (polar residues); it reads NESPLTSPSF. A compositionally biased stretch (acidic residues) spans 446–459; it reads EEIEPTDVEEEQQI. The segment covering 500–512 has biased composition (basic and acidic residues); that stretch reads ESKDGELISKVES. The segment covering 531–544 has biased composition (acidic residues); sequence DNSESEPTDITNED. Residues 549–560 are compositionally biased toward low complexity; the sequence is SSSVSVTSSTDS. The span at 581–597 shows a compositional bias: polar residues; it reads NYRQDSTTSTDSENEVS. The span at 801 to 810 shows a compositional bias: basic and acidic residues; it reads LEVHSSEHEQ. The span at 844–855 shows a compositional bias: acidic residues; the sequence is DSSESSDSAEED. A compositionally biased stretch (basic and acidic residues) spans 1083 to 1097; the sequence is VESKPVEIDGTKEET. Residues 1098–1107 are compositionally biased toward acidic residues; the sequence is VDSELADNCD.

This sequence belongs to the DNAAF1 family.

Its subcellular location is the cell projection. It localises to the cilium. Its function is as follows. Cilium-specific protein required for cilia structures. This chain is Dynein axonemal assembly factor 1 homolog, found in Aedes aegypti (Yellowfever mosquito).